The primary structure comprises 88 residues: Small ribosomal subunit protein uS17 (88 aa).

The protein belongs to the universal ribosomal protein uS17 family. Part of the 30S ribosomal subunit.

Functionally, one of the primary rRNA binding proteins, it binds specifically to the 5'-end of 16S ribosomal RNA. The sequence is that of Small ribosomal subunit protein uS17 from Mycoplasmopsis pulmonis (strain UAB CTIP) (Mycoplasma pulmonis).